A 452-amino-acid chain; its full sequence is Exodeoxyribonuclease 7 large subunit (452 aa).

Belongs to the XseA family. As to quaternary structure, heterooligomer composed of large and small subunits.

It localises to the cytoplasm. The catalysed reaction is Exonucleolytic cleavage in either 5'- to 3'- or 3'- to 5'-direction to yield nucleoside 5'-phosphates.. In terms of biological role, bidirectionally degrades single-stranded DNA into large acid-insoluble oligonucleotides, which are then degraded further into small acid-soluble oligonucleotides. This is Exodeoxyribonuclease 7 large subunit from Bacillus anthracis (strain A0248).